The sequence spans 216 residues: Pyridoxine/pyridoxamine 5'-phosphate oxidase (216 aa).

Substrate is bound by residues 12-15 and K70; that span reads RKSY. FMN contacts are provided by residues 65–70, 80–81, R86, and K87; these read RVVLVK and FT. The substrate site is built by Y127, R131, and S135. Residues 144-145 and W188 contribute to the FMN site; that span reads QS. 194 to 196 is a binding site for substrate; the sequence is RLH. R198 is a binding site for FMN.

This sequence belongs to the pyridoxamine 5'-phosphate oxidase family. In terms of assembly, homodimer. It depends on FMN as a cofactor.

The catalysed reaction is pyridoxamine 5'-phosphate + O2 + H2O = pyridoxal 5'-phosphate + H2O2 + NH4(+). It carries out the reaction pyridoxine 5'-phosphate + O2 = pyridoxal 5'-phosphate + H2O2. It functions in the pathway cofactor metabolism; pyridoxal 5'-phosphate salvage; pyridoxal 5'-phosphate from pyridoxamine 5'-phosphate: step 1/1. It participates in cofactor metabolism; pyridoxal 5'-phosphate salvage; pyridoxal 5'-phosphate from pyridoxine 5'-phosphate: step 1/1. Its function is as follows. Catalyzes the oxidation of either pyridoxine 5'-phosphate (PNP) or pyridoxamine 5'-phosphate (PMP) into pyridoxal 5'-phosphate (PLP). The chain is Pyridoxine/pyridoxamine 5'-phosphate oxidase from Polaromonas sp. (strain JS666 / ATCC BAA-500).